Here is a 445-residue protein sequence, read N- to C-terminus: Squalene synthase (445 aa).

The next 2 membrane-spanning stretches (helical) occupy residues 291 to 311 (STFTFCAIPQVMAIATLDLVY) and 405 to 425 (LIVCLAVIFSMSGLMAYIAYV).

Belongs to the phytoene/squalene synthase family. The cofactor is Mg(2+).

It is found in the endoplasmic reticulum membrane. The enzyme catalyses 2 (2E,6E)-farnesyl diphosphate + NADPH + H(+) = squalene + 2 diphosphate + NADP(+). It carries out the reaction 2 (2E,6E)-farnesyl diphosphate + NADH + H(+) = squalene + 2 diphosphate + NAD(+). It participates in terpene metabolism; lanosterol biosynthesis; lanosterol from farnesyl diphosphate: step 1/3. Catalyzes the condensation of 2 two farnesyl pyrophosphate moieties to form squalene. It is the first committed enzyme of the sterol biosynthesis pathway. Required for the biosynthesis of ergosterol. The polypeptide is Squalene synthase (SQS1) (Yarrowia lipolytica (strain CLIB 122 / E 150) (Yeast)).